Reading from the N-terminus, the 322-residue chain is Acetyl-coenzyme A carboxylase carboxyl transferase subunit alpha (322 aa).

The 255-residue stretch at 39–293 (RLASKSQQLT…KRALAESLRQ (255 aa)) folds into the CoA carboxyltransferase C-terminal domain.

The protein belongs to the AccA family. Acetyl-CoA carboxylase is a heterohexamer composed of biotin carboxyl carrier protein (AccB), biotin carboxylase (AccC) and two subunits each of ACCase subunit alpha (AccA) and ACCase subunit beta (AccD).

The protein localises to the cytoplasm. It catalyses the reaction N(6)-carboxybiotinyl-L-lysyl-[protein] + acetyl-CoA = N(6)-biotinyl-L-lysyl-[protein] + malonyl-CoA. It participates in lipid metabolism; malonyl-CoA biosynthesis; malonyl-CoA from acetyl-CoA: step 1/1. Functionally, component of the acetyl coenzyme A carboxylase (ACC) complex. First, biotin carboxylase catalyzes the carboxylation of biotin on its carrier protein (BCCP) and then the CO(2) group is transferred by the carboxyltransferase to acetyl-CoA to form malonyl-CoA. The protein is Acetyl-coenzyme A carboxylase carboxyl transferase subunit alpha of Ralstonia pickettii (strain 12J).